A 227-amino-acid polypeptide reads, in one-letter code: Cytidylate kinase (227 aa).

12 to 20 (GPSGAGKGT) contacts ATP.

Belongs to the cytidylate kinase family. Type 1 subfamily.

Its subcellular location is the cytoplasm. The enzyme catalyses CMP + ATP = CDP + ADP. It catalyses the reaction dCMP + ATP = dCDP + ADP. This Shigella sonnei (strain Ss046) protein is Cytidylate kinase.